We begin with the raw amino-acid sequence, 280 residues long: Fructose-1,6-bisphosphatase class 1 (280 aa).

The Mg(2+) site is built by Glu-64, Asp-83, Leu-85, and Asp-86. Substrate-binding positions include 86–89, Tyr-189, and Lys-220; that span reads DGSS. Residue Glu-226 participates in Mg(2+) binding.

Belongs to the FBPase class 1 family. As to quaternary structure, homotetramer. It depends on Mg(2+) as a cofactor.

It is found in the cytoplasm. It carries out the reaction beta-D-fructose 1,6-bisphosphate + H2O = beta-D-fructose 6-phosphate + phosphate. The protein operates within carbohydrate biosynthesis; gluconeogenesis. This is Fructose-1,6-bisphosphatase class 1 from Campylobacter jejuni subsp. doylei (strain ATCC BAA-1458 / RM4099 / 269.97).